Here is a 516-residue protein sequence, read N- to C-terminus: Zinc finger protein 83 (516 aa).

Residues 1–20 (MHGRKDDAQKQPVKNQLGLN) are disordered. The C2H2-type 1; degenerate zinc finger occupies 93–115 (YKCSERGKAFHQGLHFTIHQIIH). 14 consecutive C2H2-type zinc fingers follow at residues 121 to 143 (FKCD…QRIH), 149 to 171 (YKCN…RRIH), 177 to 199 (YKCN…QRIH), 205 to 227 (YKCN…RTIH), 233 to 255 (YECN…LIIH), 261 to 283 (YRCN…QRIH), 289 to 311 (YKCN…WRIH), 317 to 339 (YKCN…WRIH), 345 to 367 (YKCN…LIIH), 373 to 395 (YKCD…HRIH), 401 to 423 (YKCD…WRIH), 429 to 451 (YKCN…RKIH), 457 to 479 (FKCN…HAIH), and 485 to 507 (FKCN…QRFH).

This sequence belongs to the krueppel C2H2-type zinc-finger protein family.

It is found in the nucleus. Functionally, may be involved in transcriptional regulation. The protein is Zinc finger protein 83 (ZNF83) of Homo sapiens (Human).